Reading from the N-terminus, the 143-residue chain is Phospholipase A2 isozymes PA3A/PA3B/PA5 (143 aa).

W10, G12, and G14 together coordinate Ca(2+). 3 cysteine pairs are disulfide-bonded: C11–C33, C32–C72, and C39–C65. H36 is an active-site residue. D37 is a binding site for Ca(2+).

This sequence belongs to the phospholipase A2 family. Group III subfamily. The cofactor is Ca(2+). In terms of tissue distribution, expressed by the venom gland.

It localises to the secreted. The catalysed reaction is a 1,2-diacyl-sn-glycero-3-phosphocholine + H2O = a 1-acyl-sn-glycero-3-phosphocholine + a fatty acid + H(+). Functionally, PLA2 catalyzes the calcium-dependent hydrolysis of the 2-acyl groups in 3-sn-phosphoglycerides. The protein is Phospholipase A2 isozymes PA3A/PA3B/PA5 of Heloderma suspectum (Gila monster).